Here is a 109-residue protein sequence, read N- to C-terminus: Lipoprotein BsmA (109 aa).

A signal peptide spans 1–24 (MVSRKRNSVIYRFASLLLVLMLSA). A lipid anchor (N-palmitoyl cysteine) is attached at cysteine 25. Residue cysteine 25 is the site of S-diacylglycerol cysteine attachment.

This sequence belongs to the BhsA/McbA family.

It is found in the cell membrane. Functionally, involved in protection of biofilms against oxidative stress. This is Lipoprotein BsmA (bsmA) from Escherichia coli (strain K12).